The sequence spans 261 residues: Small ribosomal subunit protein eS4z (261 aa).

One can recognise an S4 RNA-binding domain in the interval 42–104 (LPLVLIIRNR…TNENFRLLYD (63 aa)).

The protein belongs to the eukaryotic ribosomal protein eS4 family.

It localises to the cytoplasm. This is Small ribosomal subunit protein eS4z (RPS4A) from Arabidopsis thaliana (Mouse-ear cress).